Consider the following 316-residue polypeptide: Glutathione synthetase (316 aa).

The ATP-grasp domain occupies 125–310 (KLFTAWFSDL…ITGMLMDAIE (186 aa)). 151-207 (WEKHSDIILKPLDGMGGASIFRVKEGDPNLGVIAETLTEHGTRYCMAQNYLPAIKDG) provides a ligand contact to ATP. Residues glutamate 281 and asparagine 283 each coordinate Mg(2+).

The protein belongs to the prokaryotic GSH synthase family. As to quaternary structure, homotetramer. Requires Mg(2+) as cofactor. Mn(2+) is required as a cofactor.

It catalyses the reaction gamma-L-glutamyl-L-cysteine + glycine + ATP = glutathione + ADP + phosphate + H(+). The protein operates within sulfur metabolism; glutathione biosynthesis; glutathione from L-cysteine and L-glutamate: step 2/2. With respect to regulation, inhibited by 7,8-dihydrofolate, methotrexate and trimethoprim. This Escherichia coli (strain K12) protein is Glutathione synthetase (gshB).